The chain runs to 340 residues: MQALGIKTEHFIIMCLLSGHAVFTLWYTARVKFEHECVYATTVINGGPVVWGSYNNSLIYVTFVNHSTFLDGLSGYDYSCRENLLSGDTMVKTAISTPLHDKIRIVLGTRNCHAYFWCVQLKMIFFAWFVYGMYLQFRRIRRMFGPFRSSCELISPTSYSLNYVTRVISNILLGYPYTKLARLLCDVSMRRDGMSKVFNADPISFLYMHKGVTLLMLLEVIAHISSGCIVLLTLGVAYTPCALLYPTYIRILAWVVVCTLAIVELISYVRPKPTKDNHLNHINTGGIRGICTTCCATVMSGLAIKCFYIVIFAIAVVIFMHYEQRVQVSLFGESENSQKH.

A signal peptide spans 1 to 21; that stretch reads MQALGIKTEHFIIMCLLSGHA. Residues 22-114 are Extracellular-facing; that stretch reads VFTLWYTARV…IVLGTRNCHA (93 aa). The N-linked (GlcNAc...) asparagine; by host glycan is linked to Asn-65. Residues 115 to 135 traverse the membrane as a helical segment; it reads YFWCVQLKMIFFAWFVYGMYL. The Cytoplasmic portion of the chain corresponds to 136-211; the sequence is QFRRIRRMFG…PISFLYMHKG (76 aa). Residues 212 to 232 traverse the membrane as a helical segment; the sequence is VTLLMLLEVIAHISSGCIVLL. Residues 233-248 lie on the Extracellular side of the membrane; the sequence is TLGVAYTPCALLYPTY. A helical transmembrane segment spans residues 249–269; the sequence is IRILAWVVVCTLAIVELISYV. Topologically, residues 270 to 298 are cytoplasmic; sequence RPKPTKDNHLNHINTGGIRGICTTCCATV. The chain crosses the membrane as a helical span at residues 299 to 319; that stretch reads MSGLAIKCFYIVIFAIAVVIF. The Extracellular portion of the chain corresponds to 320-340; sequence MHYEQRVQVSLFGESENSQKH.

This sequence belongs to the alphaherpesvirinae glycoprotein K family. As to quaternary structure, interacts (via UL20 interaction region) with protein UL20 homolog (via N-terminus); this interaction probably plays a role in the coordinate transport of protein UL20 homolog and gK to the trans-Golgi network (TGN), and is required for the cell surface expression of gK.

It localises to the host cell membrane. The protein resides in the host endosome membrane. It is found in the host Golgi apparatus membrane. Its function is as follows. Glycoprotein that probably modulates membrane fusion events during secondary envelopment of cytoplasmic capsids that bud into specific trans-Golgi network (TGN)-derived membranes. Also plays a role, together with gB, in virus-induced cell-to-cell fusion (syncytia formation), which is extensive during VZV infection in cultured cells. The sequence is that of Envelope glycoprotein K (gK) from Varicella-zoster virus (strain Dumas) (HHV-3).